Here is a 273-residue protein sequence, read N- to C-terminus: Large ribosomal subunit protein uL2 (273 aa).

Disordered stretches follow at residues 28 to 53 (KPFA…TTRH) and 221 to 273 (RGTA…RRTK). Over residues 39–48 (KSGGRNNNGR) the composition is skewed to low complexity.

It belongs to the universal ribosomal protein uL2 family. Part of the 50S ribosomal subunit. Forms a bridge to the 30S subunit in the 70S ribosome.

Functionally, one of the primary rRNA binding proteins. Required for association of the 30S and 50S subunits to form the 70S ribosome, for tRNA binding and peptide bond formation. It has been suggested to have peptidyltransferase activity; this is somewhat controversial. Makes several contacts with the 16S rRNA in the 70S ribosome. This Pectobacterium atrosepticum (strain SCRI 1043 / ATCC BAA-672) (Erwinia carotovora subsp. atroseptica) protein is Large ribosomal subunit protein uL2.